The sequence spans 359 residues: Nicotinate-nucleotide--dimethylbenzimidazole phosphoribosyltransferase (359 aa).

E318 acts as the Proton acceptor in catalysis.

It belongs to the CobT family. In terms of assembly, homodimer.

The enzyme catalyses 5,6-dimethylbenzimidazole + nicotinate beta-D-ribonucleotide = alpha-ribazole 5'-phosphate + nicotinate + H(+). It participates in nucleoside biosynthesis; alpha-ribazole biosynthesis; alpha-ribazole from 5,6-dimethylbenzimidazole: step 1/2. Its function is as follows. Catalyzes the synthesis of alpha-ribazole-5'-phosphate from nicotinate mononucleotide (NAMN) and 5,6-dimethylbenzimidazole (DMB). This Escherichia coli O8 (strain IAI1) protein is Nicotinate-nucleotide--dimethylbenzimidazole phosphoribosyltransferase.